Reading from the N-terminus, the 684-residue chain is Glycine--tRNA ligase beta subunit (684 aa).

Belongs to the class-II aminoacyl-tRNA synthetase family. Tetramer of two alpha and two beta subunits.

Its subcellular location is the cytoplasm. The enzyme catalyses tRNA(Gly) + glycine + ATP = glycyl-tRNA(Gly) + AMP + diphosphate. The chain is Glycine--tRNA ligase beta subunit from Pseudomonas fluorescens (strain Pf0-1).